A 322-amino-acid chain; its full sequence is GTP 3',8-cyclase (322 aa).

Positions 5 to 217 (SYGRVVDYLR…DIISKKYNIK (213 aa)) constitute a Radical SAM core domain. GTP is bound at residue R14. Residues C21 and C25 each contribute to the [4Fe-4S] cluster site. Residue Y27 participates in S-adenosyl-L-methionine binding. C28 provides a ligand contact to [4Fe-4S] cluster. GTP is bound at residue R64. Position 68 (G68) interacts with S-adenosyl-L-methionine. T95 contributes to the GTP binding site. S119 is a binding site for S-adenosyl-L-methionine. K155 provides a ligand contact to GTP. M189 contacts S-adenosyl-L-methionine. Residues C249 and C252 each contribute to the [4Fe-4S] cluster site. 254–256 (RLR) is a binding site for GTP. C266 provides a ligand contact to [4Fe-4S] cluster.

It belongs to the radical SAM superfamily. MoaA family. In terms of assembly, monomer and homodimer. [4Fe-4S] cluster serves as cofactor.

It catalyses the reaction GTP + AH2 + S-adenosyl-L-methionine = (8S)-3',8-cyclo-7,8-dihydroguanosine 5'-triphosphate + 5'-deoxyadenosine + L-methionine + A + H(+). It participates in cofactor biosynthesis; molybdopterin biosynthesis. Functionally, catalyzes the cyclization of GTP to (8S)-3',8-cyclo-7,8-dihydroguanosine 5'-triphosphate. The chain is GTP 3',8-cyclase from Campylobacter fetus subsp. fetus (strain 82-40).